We begin with the raw amino-acid sequence, 489 residues long: Putative ATP-dependent RNA helicase T26G10.1 (489 aa).

The Q motif signature appears at 44–72; it reads KSFAELGVSQPLCDACQRLGWMKPSKIQQ. Positions 75 to 246 constitute a Helicase ATP-binding domain; that stretch reads LPHALQGKDV…RASLRDPARV (172 aa). Residue 88 to 95 participates in ATP binding; it reads AETGSGKT. Residues 194–197 carry the DEAD box motif; that stretch reads DEAD. The Helicase C-terminal domain maps to 257–417; it reads NLKQHYIFVP…EYKCVENEVM (161 aa). Residues 433–489 form a disordered region; the sequence is EMKEMDEKKKSGKKRRQNDDFGDTEESGGRFKMGIKSMGGRGGSGGGRGGKKKKMSK. Residues 469-480 are compositionally biased toward gly residues; that stretch reads SMGGRGGSGGGR.

This sequence belongs to the DEAD box helicase family. DDX47/RRP3 subfamily.

It localises to the nucleus. It carries out the reaction ATP + H2O = ADP + phosphate + H(+). In terms of biological role, probable ATP-dependent RNA helicase which may be involved in ribosome biogenesis. This is Putative ATP-dependent RNA helicase T26G10.1 from Caenorhabditis elegans.